The chain runs to 494 residues: DBIRD complex subunit ZNF326 (494 aa).

Disordered stretches follow at residues 1-22 (MDRE…QSFS), 147-170 (AFGG…RGQM), and 202-264 (KMAP…NSEK). The segment covering 7-22 (SYNQRSVNSYGNQSFS) has biased composition (polar residues). The Bipartite nuclear localization signal signature appears at 200–221 (KRKMAPPFKPVGFFGKKQKLSK). C2H2 AKAP95-type zinc fingers lie at residues 273–295 (CSFC…SATH) and 365–388 (CSAC…SADH). A disordered region spans residues 429-494 (PFETQPDEQQ…CDPLTTTDEV (66 aa)). Residues 433-451 (QPDEQQQEQEEEEEEEEQQ) show a composition bias toward acidic residues.

This sequence belongs to the AKAP95 family. Component of the DBIRD complex.

The protein localises to the nucleus. Core component of the DBIRD complex, a multiprotein complex that acts at the interface between core mRNP particles and RNA polymerase II (RNAPII) and integrates transcript elongation with the regulation of alternative splicing. In Xenopus laevis (African clawed frog), this protein is DBIRD complex subunit ZNF326 (znf326).